A 344-amino-acid polypeptide reads, in one-letter code: NADH-quinone oxidoreductase subunit H 2 (344 aa).

Transmembrane regions (helical) follow at residues 13–33 (LPILFKIVAIVLPLILIVAWL), 82–102 (ILFLLAPVLAIAPALAVWAVI), 116–136 (ALLYILAIGSMSVYGIILAGW), 161–181 (MGFALVGVLIAGGSLNLGEIV), 188–208 (FWHWFWLPLFPLFLIYFISGV), 240–260 (LFFLAEYIEMILVSTLAALMF), 280–300 (VPGIVWLLIKTAIFLFFYLWF), and 319–339 (VFIPITIVWLLVVGGARVAQL).

Belongs to the complex I subunit 1 family. As to quaternary structure, NDH-1 is composed of 14 different subunits. Subunits NuoA, H, J, K, L, M, N constitute the membrane sector of the complex.

It is found in the cell inner membrane. It carries out the reaction a quinone + NADH + 5 H(+)(in) = a quinol + NAD(+) + 4 H(+)(out). Its function is as follows. NDH-1 shuttles electrons from NADH, via FMN and iron-sulfur (Fe-S) centers, to quinones in the respiratory chain. The immediate electron acceptor for the enzyme in this species is believed to be ubiquinone. Couples the redox reaction to proton translocation (for every two electrons transferred, four hydrogen ions are translocated across the cytoplasmic membrane), and thus conserves the redox energy in a proton gradient. This subunit may bind ubiquinone. In Nitrosococcus oceani (strain ATCC 19707 / BCRC 17464 / JCM 30415 / NCIMB 11848 / C-107), this protein is NADH-quinone oxidoreductase subunit H 2.